We begin with the raw amino-acid sequence, 262 residues long: Acyl-[acyl-carrier-protein]--UDP-N-acetylglucosamine O-acyltransferase (262 aa).

This sequence belongs to the transferase hexapeptide repeat family. LpxA subfamily. In terms of assembly, homotrimer.

The protein localises to the cytoplasm. The catalysed reaction is a (3R)-hydroxyacyl-[ACP] + UDP-N-acetyl-alpha-D-glucosamine = a UDP-3-O-[(3R)-3-hydroxyacyl]-N-acetyl-alpha-D-glucosamine + holo-[ACP]. Its pathway is glycolipid biosynthesis; lipid IV(A) biosynthesis; lipid IV(A) from (3R)-3-hydroxytetradecanoyl-[acyl-carrier-protein] and UDP-N-acetyl-alpha-D-glucosamine: step 1/6. In terms of biological role, involved in the biosynthesis of lipid A, a phosphorylated glycolipid that anchors the lipopolysaccharide to the outer membrane of the cell. This chain is Acyl-[acyl-carrier-protein]--UDP-N-acetylglucosamine O-acyltransferase, found in Campylobacter concisus (strain 13826).